The sequence spans 1159 residues: MPPVSKNTRTSSKTVKKPYDPPQGSSRPFFTVLKRAFSSVLHPFTSGLDEKASGTASKDRKSGRAGTKSLLTPELTPHYLGKSPRIIRVSNRSHVRTIDGIEEKVHTNTFEPRKPKQKQDYTNSPTLFKRHDELSLKSLNSLHPSSALSKKLGSTSQHQIATPKSSASLLNILRSLHDEQKNTLNISSVKQDRITEANPTCEKRKPSRSPSPMLSKKKSVARASENEPSAKQNKSFSGNDSHKSLTDIRDKENGETEVSAKNHVPHRSSRRRRRHQRLIPIIYETLEQMDLRKPVLVNAEVQTDSNPGNTMFIDKQDIYHRLSTPTSRKRQTLEKGHIKAFSAVDEDLDEIFACEDDVHYTALPKQNPKSERILEPIIASPKDNTSDKGLLTKSAPTFEELQASITPKPVKTSPNDTALTLANAEDNKTFEHQPLSKDTEAPKSQFSSSPTKESTTRKSEVEPPSPSKEIKSSHFSVPEFKFEPKTEATTDKKLNVPKFEFKPTATADVQTNRLKENEPKPTFFAQLPSKTQETPSITENKPSFFSQLSPKREETEKKDNAPSAPASTSGFSFGGFAPKTLEEKEETKAPTFNFSLNNASSTQDTTKPTLQFNFGSSFGKPTSNIFNDKKTSENGLASSTVASESKPSAPESKPSSGFGNTAGSSPFSFNLTKESKEVPPTNSFSFAKKGKDEANDSLSAKASTPFSFAKPNTENVTTTAPQFSFNFTKPNTDAKTNLLPEKTFNEEAVKQKETEKEVPPTGPKASEIKDSVSSNNAVPSSTFNFVSPFAAVSEKTNENNIPNDTTKTNGNATKRTLEQTEDAKPFAFSFGSTTEQANKKASTSNETTKPQLDTSSKTDGVTANAPFSFASAFNAPKPSTNTADGKDSASNLTTPSPAFSFGNNSGVKASSNNNPSTNSSTAPFSFGTSNKPAFSFGSATSKTTSEGTAPAASASAPAPTTSAFSFGASNSSMNKEENTPMAKDAGDTAPASGFKSGFSFGANNSPQPASMFGTSTPAPSSAFAFGNQSGTNPAAPAGFGGITNTATNNPPSTGFTFTPSNAGSTAAPMFGAGNTPNPSGSINNASQAFAFGSGEPSNPASNPPSTGFSFGAATPSAFNASASQSPAPNGIQFNLGSSNSQTNAPPGRKIAVPRSRRKR.

Polar residues predominate over residues 1-13; that stretch reads MPPVSKNTRTSSK. 4 disordered regions span residues 1–28, 44–77, 106–125, and 183–273; these read MPPV…SSRP, FTSG…ELTP, HTNT…TNSP, and TLNI…RRRR. Basic and acidic residues-rich tracts occupy residues 48-62 and 106-119; these read LDEK…DRKS and HTNT…KQKQ. The residue at position 211 (serine 211) is a Phosphoserine. A compositionally biased stretch (polar residues) spans 226–239; it reads NEPSAKQNKSFSGN. Residues 240–260 are compositionally biased toward basic and acidic residues; it reads DSHKSLTDIRDKENGETEVSA. Residues 263–273 are compositionally biased toward basic residues; sequence HVPHRSSRRRR. Serine 380 carries the phosphoserine modification. The span at 426–441 shows a compositional bias: basic and acidic residues; it reads DNKTFEHQPLSKDTEA. Disordered regions lie at residues 426-715, 746-780, and 794-1159; these read DNKT…NTEN, EEAV…AVPS, and EKTN…RRKR. Residues 442–453 are compositionally biased toward polar residues; the sequence is PKSQFSSSPTKE. Serine 465 is subject to Phosphoserine. Residues 480 to 494 are compositionally biased toward basic and acidic residues; the sequence is FKFEPKTEATTDKKL. Over residues 528–549 the composition is skewed to polar residues; sequence PSKTQETPSITENKPSFFSQLS. The residue at position 546 (serine 546) is a Phosphoserine. The segment covering 550-560 has biased composition (basic and acidic residues); it reads PKREETEKKDN. The segment covering 590–626 has biased composition (polar residues); the sequence is PTFNFSLNNASSTQDTTKPTLQFNFGSSFGKPTSNIF. Over residues 642–656 the composition is skewed to low complexity; it reads ASESKPSAPESKPSS. Composition is skewed to polar residues over residues 657-672 and 696-715; these read GFGN…FNLT and DSLS…NTEN. Residues 746–758 show a composition bias toward basic and acidic residues; sequence EEAVKQKETEKEV. 2 stretches are compositionally biased toward polar residues: residues 771–780 and 798–814; these read SVSSNNAVPS and ENNI…NATK. Basic and acidic residues predominate over residues 815 to 824; that stretch reads RTLEQTEDAK. A compositionally biased stretch (polar residues) spans 830 to 861; that stretch reads FGSTTEQANKKASTSNETTKPQLDTSSKTDGV. Residues 863-879 show a composition bias toward low complexity; it reads ANAPFSFASAFNAPKPS. Positions 880–908 are enriched in polar residues; it reads TNTADGKDSASNLTTPSPAFSFGNNSGVK. Residues 909-926 are compositionally biased toward low complexity; it reads ASSNNNPSTNSSTAPFSF. Polar residues predominate over residues 927-947; it reads GTSNKPAFSFGSATSKTTSEG. Low complexity predominate over residues 948-963; sequence TAPAASASAPAPTTSA. 5 stretches are compositionally biased toward polar residues: residues 1001–1019, 1042–1064, 1074–1087, 1095–1108, and 1116–1144; these read GANN…TPAP, ITNT…NAGS, NTPN…NASQ, EPSN…STGF, and SAFN…QTNA.

This sequence to yeast nucleoporins NUP1 and NUP2.

Its subcellular location is the nucleus. The protein localises to the nuclear pore complex. Nucleoporins may be involved in both binding and translocation of the proteins during nucleocytoplasmic transport. In S.pombe it is required for the nuclear localization of retrotransposon tf1. The sequence is that of Nucleoporin nup124 (nup124) from Schizosaccharomyces pombe (strain 972 / ATCC 24843) (Fission yeast).